The sequence spans 543 residues: Vibriobactin-specific 2,3-dihydroxybenzoate-AMP ligase (543 aa).

Residues 240–259 traverse the membrane as a helical segment; it reads FPLSSPGALGVFWAGGCVVL.

This sequence belongs to the ATP-dependent AMP-binding enzyme family.

Its subcellular location is the cell inner membrane. It carries out the reaction 2,3-dihydroxybenzoate + holo-[ACP] + ATP = 2,3-dihydroxybenzoyl-[ACP] + AMP + diphosphate. It participates in siderophore biosynthesis; vibriobactin biosynthesis. Activation of the carboxylate group of 2,3-dihydroxy-benzoate (DHB), via ATP-dependent PPi exchange reactions, to the acyladenylate, preparing that molecule for the final stages of vibriobactin synthesis. The polypeptide is Vibriobactin-specific 2,3-dihydroxybenzoate-AMP ligase (vibE) (Vibrio cholerae serotype O1 (strain ATCC 39315 / El Tor Inaba N16961)).